Consider the following 109-residue polypeptide: MSPHYIGTMADAADHDAGQDVRLRARVEGVVQAVGFRYWTVRKAEELSLTGTVRNEDDGTVAVVVEGPQSVVLEFRRWLGSDDAPGRVDHVEESVSPATGEFSSFDVVY.

The Acylphosphatase-like domain occupies 22–109 (RLRARVEGVV…GEFSSFDVVY (88 aa)). Residues Arg-37 and Asn-55 contribute to the active site.

It belongs to the acylphosphatase family.

The catalysed reaction is an acyl phosphate + H2O = a carboxylate + phosphate + H(+). The protein is Acylphosphatase (acyP) of Arthrobacter sp. (strain FB24).